The sequence spans 484 residues: EF-hand calcium-binding domain-containing protein 14 (484 aa).

Disordered regions lie at residues 1 to 48, 227 to 255, and 313 to 395; these read MKKR…TDEE, GSME…HSES, and EQRT…FTSD. Residues 37-48 show a composition bias toward acidic residues; that stretch reads PDSDSESSTDEE. Composition is skewed to polar residues over residues 228–239, 315–324, and 335–347; these read SMENNGSNQILP, RTNVSSSTME, and LVTN…QAQS. EF-hand domains lie at 423-452 and 453-484; these read SSIK…WNSL and GSAM…ALGI. Positions 466, 468, 470, 472, and 477 each coordinate Ca(2+).

This chain is EF-hand calcium-binding domain-containing protein 14 (Efcab14), found in Mus musculus (Mouse).